The following is an 88-amino-acid chain: uncharacterized protein (88 aa).

It to E.coli YihD.

This is an uncharacterized protein from Haemophilus influenzae (strain ATCC 51907 / DSM 11121 / KW20 / Rd).